Here is a 204-residue protein sequence, read N- to C-terminus: Large ribosomal subunit protein uL4 (204 aa).

The interval 49-76 (KTKGISDVSGTTAKPYGQKRTGRARQGS) is disordered.

It belongs to the universal ribosomal protein uL4 family. Part of the 50S ribosomal subunit.

Its function is as follows. One of the primary rRNA binding proteins, this protein initially binds near the 5'-end of the 23S rRNA. It is important during the early stages of 50S assembly. It makes multiple contacts with different domains of the 23S rRNA in the assembled 50S subunit and ribosome. Functionally, forms part of the polypeptide exit tunnel. The polypeptide is Large ribosomal subunit protein uL4 (Wolbachia sp. subsp. Drosophila simulans (strain wRi)).